The sequence spans 163 residues: uncharacterized protein (163 aa).

The interval 128 to 163 is disordered; that stretch reads PKKEKIKKAKRKKKGAKRASKKQKAKSKSARKSRRV. Basic residues predominate over residues 129-163; that stretch reads KKEKIKKAKRKKKGAKRASKKQKAKSKSARKSRRV.

This is an uncharacterized protein from Sulfurisphaera tokodaii (strain DSM 16993 / JCM 10545 / NBRC 100140 / 7) (Sulfolobus tokodaii).